The sequence spans 447 residues: ATP-dependent protease ATPase subunit HslU (447 aa).

ATP contacts are provided by residues Ile-17, Gly-59 to Glu-64, Asp-256, Glu-321, and Arg-393.

The protein belongs to the ClpX chaperone family. HslU subfamily. As to quaternary structure, a double ring-shaped homohexamer of HslV is capped on each side by a ring-shaped HslU homohexamer. The assembly of the HslU/HslV complex is dependent on binding of ATP.

The protein localises to the cytoplasm. Its function is as follows. ATPase subunit of a proteasome-like degradation complex; this subunit has chaperone activity. The binding of ATP and its subsequent hydrolysis by HslU are essential for unfolding of protein substrates subsequently hydrolyzed by HslV. HslU recognizes the N-terminal part of its protein substrates and unfolds these before they are guided to HslV for hydrolysis. In Pseudomonas putida (strain W619), this protein is ATP-dependent protease ATPase subunit HslU.